A 177-amino-acid polypeptide reads, in one-letter code: Ribulose bisphosphate carboxylase small subunit, chloroplastic 5 (177 aa).

Residues 1 to 56 (MASSMMASTAAVARAGPAQSSMVAPFNGLRSSVAFPATRKANNDLSTLPSNGGRVS) constitute a chloroplast transit peptide.

This sequence belongs to the RuBisCO small chain family. As to quaternary structure, heterohexadecamer of 8 large and 8 small subunits.

It localises to the plastid. The protein localises to the chloroplast. In terms of biological role, ruBisCO catalyzes two reactions: the carboxylation of D-ribulose 1,5-bisphosphate, the primary event in carbon dioxide fixation, as well as the oxidative fragmentation of the pentose substrate. Both reactions occur simultaneously and in competition at the same active site. Although the small subunit is not catalytic it is essential for maximal activity. The protein is Ribulose bisphosphate carboxylase small subunit, chloroplastic 5 of Lemna gibba (Swollen duckweed).